The sequence spans 259 residues: Adenosylcobinamide-GDP ribazoletransferase (259 aa).

The next 7 membrane-spanning stretches (helical) occupy residues 36–56 (FSPLIGVLIGVLQVSVLILLL), 65–85 (MPFIAIALGLWITGGIHVDGL), 108–128 (IGASGIIALTINLLLQIAALF), 133–153 (LILFAIPIASFWGRYSQIWAI), 175–195 (GFLIESIPSYAFLSFLIFILI), 201–221 (IISTPNLIIGIIVGFLPALII), and 238–258 (GASVVLVETCMLIIFSIILPA).

The protein belongs to the CobS family. Requires Mg(2+) as cofactor.

It is found in the cell inner membrane. It carries out the reaction alpha-ribazole + adenosylcob(III)inamide-GDP = adenosylcob(III)alamin + GMP + H(+). The catalysed reaction is alpha-ribazole 5'-phosphate + adenosylcob(III)inamide-GDP = adenosylcob(III)alamin 5'-phosphate + GMP + H(+). It participates in cofactor biosynthesis; adenosylcobalamin biosynthesis; adenosylcobalamin from cob(II)yrinate a,c-diamide: step 7/7. Functionally, joins adenosylcobinamide-GDP and alpha-ribazole to generate adenosylcobalamin (Ado-cobalamin). Also synthesizes adenosylcobalamin 5'-phosphate from adenosylcobinamide-GDP and alpha-ribazole 5'-phosphate. This Prochlorococcus marinus (strain SARG / CCMP1375 / SS120) protein is Adenosylcobinamide-GDP ribazoletransferase.